Reading from the N-terminus, the 948-residue chain is UvrABC system protein A (948 aa).

Gly33–Ser40 serves as a coordination point for ATP. The C4-type zinc finger occupies Cys252–Cys279. 2 ABC transporter domains span residues Trp309 to Leu587 and Ala607 to Lys935. Gly639–Ser646 contacts ATP. The segment at Cys738 to Cys764 adopts a C4-type zinc-finger fold.

This sequence belongs to the ABC transporter superfamily. UvrA family. In terms of assembly, forms a heterotetramer with UvrB during the search for lesions.

The protein resides in the cytoplasm. In terms of biological role, the UvrABC repair system catalyzes the recognition and processing of DNA lesions. UvrA is an ATPase and a DNA-binding protein. A damage recognition complex composed of 2 UvrA and 2 UvrB subunits scans DNA for abnormalities. When the presence of a lesion has been verified by UvrB, the UvrA molecules dissociate. This Staphylococcus aureus (strain MRSA252) protein is UvrABC system protein A.